The following is a 123-amino-acid chain: UPF0342 protein LAR_1202 (123 aa).

Belongs to the UPF0342 family.

The polypeptide is UPF0342 protein LAR_1202 (Limosilactobacillus reuteri subsp. reuteri (strain JCM 1112) (Lactobacillus reuteri)).